A 387-amino-acid chain; its full sequence is Phosphoglycerate kinase (387 aa).

Substrate is bound by residues 21–23 (DLN), Arg-36, and 59–62 (HLGR). Residue Lys-84 is modified to N6-acetyllysine. The substrate site is built by Arg-113 and Arg-146. Residues Lys-197, Glu-314, and 340-343 (GGDT) contribute to the ATP site.

Belongs to the phosphoglycerate kinase family. Monomer.

The protein resides in the cytoplasm. It catalyses the reaction (2R)-3-phosphoglycerate + ATP = (2R)-3-phospho-glyceroyl phosphate + ADP. The protein operates within carbohydrate degradation; glycolysis; pyruvate from D-glyceraldehyde 3-phosphate: step 2/5. The sequence is that of Phosphoglycerate kinase from Shigella sonnei (strain Ss046).